The following is a 341-amino-acid chain: L-threonine 3-dehydrogenase (341 aa).

A Zn(2+)-binding site is contributed by Cys-38. Active-site charge relay system residues include Thr-40 and His-43. Residues His-63, Glu-64, Cys-93, Cys-96, Cys-99, and Cys-107 each coordinate Zn(2+). Residues Ile-175, Asp-195, Arg-200, 262–264 (LGI), and 286–287 (IY) each bind NAD(+).

It belongs to the zinc-containing alcohol dehydrogenase family. In terms of assembly, homotetramer. Requires Zn(2+) as cofactor.

The protein localises to the cytoplasm. It catalyses the reaction L-threonine + NAD(+) = (2S)-2-amino-3-oxobutanoate + NADH + H(+). Its pathway is amino-acid degradation; L-threonine degradation via oxydo-reductase pathway; glycine from L-threonine: step 1/2. Its function is as follows. Catalyzes the NAD(+)-dependent oxidation of L-threonine to 2-amino-3-ketobutyrate. The chain is L-threonine 3-dehydrogenase from Shewanella baltica (strain OS185).